Here is a 216-residue protein sequence, read N- to C-terminus: Elongation factor 1-beta (216 aa).

This sequence belongs to the EF-1-beta/EF-1-delta family. EF-1 is composed of 4 subunits: alpha, beta, delta, and gamma. Interacts with actin.

It is found in the cytoplasm. In terms of biological role, EF-1-beta and EF-1-delta stimulate the exchange of GDP bound to EF-1-alpha to GTP. The polypeptide is Elongation factor 1-beta (efa1B) (Dictyostelium discoideum (Social amoeba)).